A 749-amino-acid chain; its full sequence is 5-methyltetrahydropteroyltriglutamate--homocysteine methyltransferase (749 aa).

5-methyltetrahydropteroyltri-L-glutamate contacts are provided by residues 15-18 and Lys114; that span reads RELK. L-homocysteine-binding positions include 425–427 and Glu478; that span reads IGS. L-methionine contacts are provided by residues 425–427 and Glu478; that span reads IGS. Trp555 provides a ligand contact to 5-methyltetrahydropteroyltri-L-glutamate. Asp593 provides a ligand contact to L-homocysteine. Asp593 lines the L-methionine pocket. Residue Glu599 coordinates 5-methyltetrahydropteroyltri-L-glutamate. Zn(2+)-binding residues include His636, Cys638, and Glu660. His689 (proton donor) is an active-site residue. Cys721 lines the Zn(2+) pocket.

The protein belongs to the vitamin-B12 independent methionine synthase family. It depends on Zn(2+) as a cofactor.

The catalysed reaction is 5-methyltetrahydropteroyltri-L-glutamate + L-homocysteine = tetrahydropteroyltri-L-glutamate + L-methionine. The protein operates within amino-acid biosynthesis; L-methionine biosynthesis via de novo pathway; L-methionine from L-homocysteine (MetE route): step 1/1. Functionally, catalyzes the transfer of a methyl group from 5-methyltetrahydrofolate to homocysteine resulting in methionine formation. The chain is 5-methyltetrahydropteroyltriglutamate--homocysteine methyltransferase from Streptococcus thermophilus (strain ATCC BAA-491 / LMD-9).